The sequence spans 2378 residues: Serine/threonine-protein kinase ATM (2378 aa).

Residues 1415 to 1937 (LSARKRNTMM…LHTILMYDDE (523 aa)) form the FAT domain. In terms of domain architecture, PI3K/PI4K catalytic spans 2044–2366 (WKDVFTIADG…LLREATSADN (323 aa)). The interval 2050 to 2056 (IADGIST) is G-loop. The tract at residues 2218–2226 (GLGDRHASN) is catalytic loop. An activation loop region spans residues 2238–2263 (HIDLGMILEYSKRTLPVPEQVPFRIT). An FATC domain is found at 2346 to 2378 (TAQSSNLQIRRLLREATSADNLSRMFCGWMPFL).

The protein belongs to the PI3/PI4-kinase family. ATM subfamily.

The protein localises to the nucleus. The enzyme catalyses L-seryl-[protein] + ATP = O-phospho-L-seryl-[protein] + ADP + H(+). It carries out the reaction L-threonyl-[protein] + ATP = O-phospho-L-threonyl-[protein] + ADP + H(+). Serine/threonine protein kinase which activates checkpoint signaling in the presence of DNA double strand breaks (DSBs) and other forms of DNA damage induced by ionizing radiation and other genotoxic stresses such as UV. Plays a role in maintaining genome stability. The polypeptide is Serine/threonine-protein kinase ATM (atm-1) (Caenorhabditis elegans).